Here is a 308-residue protein sequence, read N- to C-terminus: Ribosomal RNA small subunit methyltransferase H (308 aa).

S-adenosyl-L-methionine-binding positions include 33 to 35, Asp-51, Phe-82, Asp-96, and Gln-103; that span reads GGY.

It belongs to the methyltransferase superfamily. RsmH family.

The protein resides in the cytoplasm. The catalysed reaction is cytidine(1402) in 16S rRNA + S-adenosyl-L-methionine = N(4)-methylcytidine(1402) in 16S rRNA + S-adenosyl-L-homocysteine + H(+). Functionally, specifically methylates the N4 position of cytidine in position 1402 (C1402) of 16S rRNA. The protein is Ribosomal RNA small subunit methyltransferase H of Rickettsia canadensis (strain McKiel).